A 254-amino-acid polypeptide reads, in one-letter code: 14-3-3 protein 2 (254 aa).

The protein belongs to the 14-3-3 family. In terms of assembly, homodimer.

This chain is 14-3-3 protein 2 (TFT2), found in Solanum lycopersicum (Tomato).